A 549-amino-acid chain; its full sequence is Hydroxylamine reductase (549 aa).

Residues Cys5, Cys8, Cys17, and Cys23 each contribute to the [4Fe-4S] cluster site. Residues His242, Glu266, Cys310, Cys402, Cys430, Cys455, Glu490, and Lys492 each coordinate hybrid [4Fe-2O-2S] cluster. Cys402 bears the Cysteine persulfide mark.

Belongs to the HCP family. Requires [4Fe-4S] cluster as cofactor. Hybrid [4Fe-2O-2S] cluster serves as cofactor.

The protein localises to the cytoplasm. It catalyses the reaction A + NH4(+) + H2O = hydroxylamine + AH2 + H(+). Catalyzes the reduction of hydroxylamine to form NH(3) and H(2)O. The polypeptide is Hydroxylamine reductase (Clostridium novyi (strain NT)).